The following is a 287-amino-acid chain: Uroporphyrinogen-III C-methyltransferase (287 aa).

The span at 1–10 shows a compositional bias: polar residues; the sequence is MAGKTVTNGA. Residues 1-24 are disordered; that stretch reads MAGKTVTNGAAQGKAARSGADGAV. S-adenosyl-L-methionine contacts are provided by residues proline 40, 116-118, threonine 146, and methionine 199; that span reads GGD.

It belongs to the precorrin methyltransferase family.

It carries out the reaction uroporphyrinogen III + 2 S-adenosyl-L-methionine = precorrin-2 + 2 S-adenosyl-L-homocysteine + H(+). The protein operates within porphyrin-containing compound metabolism; siroheme biosynthesis; precorrin-2 from uroporphyrinogen III: step 1/1. Its function is as follows. Catalyzes the methylation of both C-2 and C-7 of uroporphyrinogen III leading to precorrin-1 and precorrin-2; their oxidative esterification gives respectively factor I octamethyl ester and sirohydrochlorin. Inactivation of uroporphyrinogen-III methyltransferase results in the loss of nitrite and nitric oxide reductase activities, but not of nitrous oxide reductase activity. Likely involved in heme D1 biosynthesis. The polypeptide is Uroporphyrinogen-III C-methyltransferase (nirE) (Paracoccus denitrificans (strain Pd 1222)).